Consider the following 143-residue polypeptide: Probable cyclic pyranopterin monophosphate synthase (143 aa).

Residues 61-63 (YCH) and 97-98 (ME) contribute to the substrate site. Asp-112 is a catalytic residue.

This sequence belongs to the MoaC family. Homohexamer; trimer of dimers.

It catalyses the reaction (8S)-3',8-cyclo-7,8-dihydroguanosine 5'-triphosphate = cyclic pyranopterin phosphate + diphosphate. Its pathway is cofactor biosynthesis; molybdopterin biosynthesis. Functionally, catalyzes the conversion of (8S)-3',8-cyclo-7,8-dihydroguanosine 5'-triphosphate to cyclic pyranopterin monophosphate (cPMP). This chain is Probable cyclic pyranopterin monophosphate synthase, found in Thermoplasma acidophilum (strain ATCC 25905 / DSM 1728 / JCM 9062 / NBRC 15155 / AMRC-C165).